A 478-amino-acid chain; its full sequence is Proline--tRNA ligase (478 aa).

Belongs to the class-II aminoacyl-tRNA synthetase family. ProS type 3 subfamily. Homodimer.

Its subcellular location is the cytoplasm. The enzyme catalyses tRNA(Pro) + L-proline + ATP = L-prolyl-tRNA(Pro) + AMP + diphosphate. In terms of biological role, catalyzes the attachment of proline to tRNA(Pro) in a two-step reaction: proline is first activated by ATP to form Pro-AMP and then transferred to the acceptor end of tRNA(Pro). The chain is Proline--tRNA ligase from Clostridium botulinum (strain Langeland / NCTC 10281 / Type F).